A 349-amino-acid chain; its full sequence is UDP-N-acetylenolpyruvoylglucosamine reductase (349 aa).

The FAD-binding PCMH-type domain maps to 24–197 (FGIAATARFA…VSVTFRLPKQ (174 aa)). Arg-173 is a catalytic residue. The Proton donor role is filled by Ser-249. Residue Glu-345 is part of the active site.

The protein belongs to the MurB family. FAD is required as a cofactor.

It localises to the cytoplasm. The enzyme catalyses UDP-N-acetyl-alpha-D-muramate + NADP(+) = UDP-N-acetyl-3-O-(1-carboxyvinyl)-alpha-D-glucosamine + NADPH + H(+). The protein operates within cell wall biogenesis; peptidoglycan biosynthesis. In terms of biological role, cell wall formation. The protein is UDP-N-acetylenolpyruvoylglucosamine reductase of Burkholderia lata (strain ATCC 17760 / DSM 23089 / LMG 22485 / NCIMB 9086 / R18194 / 383).